Reading from the N-terminus, the 66-residue chain is Toxin Os1 (66 aa).

One can recognise an LCN-type CS-alpha/beta domain in the interval 2–66 (RDGYIVQLHN…PIKWLDPKCY (65 aa)). 4 disulfides stabilise this stretch: Cys-12-Cys-65, Cys-16-Cys-37, Cys-22-Cys-47, and Cys-26-Cys-49.

Belongs to the long (4 C-C) scorpion toxin superfamily. Sodium channel inhibitor family. Alpha subfamily. In terms of tissue distribution, expressed by the venom gland.

The protein resides in the secreted. Alpha toxins bind voltage-independently at site-3 of sodium channels (Nav) and inhibit the inactivation of the activated channels, thereby blocking neuronal transmission. This toxin possesses a high paralytic activity against mice. The protein is Toxin Os1 of Orthochirus scrobiculosus (Central Asian scorpion).